The chain runs to 212 residues: Adenylate kinase (212 aa).

10–15 (GAGKGT) provides a ligand contact to ATP. The segment at 30–59 (STGDMFRAAMANQTEMGVLAKSYIDKGELV) is NMP. AMP contacts are provided by residues Thr-31, Arg-36, 57–59 (ELV), 86–89 (GYPR), and Gln-93. The interval 127–159 (GRIIHRQTGETFHKVFNPPANYNEEDYYQREDD) is LID. ATP is bound by residues Arg-128 and 137–138 (TF). AMP-binding residues include Arg-156 and Arg-167. Position 195 (Gln-195) interacts with ATP.

The protein belongs to the adenylate kinase family. In terms of assembly, monomer.

The protein localises to the cytoplasm. The catalysed reaction is AMP + ATP = 2 ADP. It functions in the pathway purine metabolism; AMP biosynthesis via salvage pathway; AMP from ADP: step 1/1. Its function is as follows. Catalyzes the reversible transfer of the terminal phosphate group between ATP and AMP. Plays an important role in cellular energy homeostasis and in adenine nucleotide metabolism. This Streptococcus gordonii (strain Challis / ATCC 35105 / BCRC 15272 / CH1 / DL1 / V288) protein is Adenylate kinase.